A 166-amino-acid chain; its full sequence is Lipoprotein signal peptidase (166 aa).

3 consecutive transmembrane segments (helical) span residues W12–Q32, W70–S90, and A102–V122. Active-site residues include D123 and D141. A helical membrane pass occupies residues F137–L157.

This sequence belongs to the peptidase A8 family.

The protein resides in the cell inner membrane. The enzyme catalyses Release of signal peptides from bacterial membrane prolipoproteins. Hydrolyzes -Xaa-Yaa-Zaa-|-(S,diacylglyceryl)Cys-, in which Xaa is hydrophobic (preferably Leu), and Yaa (Ala or Ser) and Zaa (Gly or Ala) have small, neutral side chains.. Its pathway is protein modification; lipoprotein biosynthesis (signal peptide cleavage). Functionally, this protein specifically catalyzes the removal of signal peptides from prolipoproteins. The chain is Lipoprotein signal peptidase from Salmonella choleraesuis (strain SC-B67).